The primary structure comprises 719 residues: Phosphoribosylformylglycinamidine synthase subunit PurL (719 aa).

H47 is an active-site residue. ATP contacts are provided by Y50 and K89. Residue E91 coordinates Mg(2+). Residues 92 to 95 (SHNH) and R114 contribute to the substrate site. H93 (proton acceptor) is an active-site residue. D115 is a binding site for Mg(2+). Q238 lines the substrate pocket. Residue D266 participates in Mg(2+) binding. Residue 310–312 (ESQ) coordinates substrate. Positions 488 and 525 each coordinate ATP. Mg(2+) is bound at residue N526. Substrate is bound at residue S528.

This sequence belongs to the FGAMS family. As to quaternary structure, monomer. Part of the FGAM synthase complex composed of 1 PurL, 1 PurQ and 2 PurS subunits.

It localises to the cytoplasm. It carries out the reaction N(2)-formyl-N(1)-(5-phospho-beta-D-ribosyl)glycinamide + L-glutamine + ATP + H2O = 2-formamido-N(1)-(5-O-phospho-beta-D-ribosyl)acetamidine + L-glutamate + ADP + phosphate + H(+). It participates in purine metabolism; IMP biosynthesis via de novo pathway; 5-amino-1-(5-phospho-D-ribosyl)imidazole from N(2)-formyl-N(1)-(5-phospho-D-ribosyl)glycinamide: step 1/2. Part of the phosphoribosylformylglycinamidine synthase complex involved in the purines biosynthetic pathway. Catalyzes the ATP-dependent conversion of formylglycinamide ribonucleotide (FGAR) and glutamine to yield formylglycinamidine ribonucleotide (FGAM) and glutamate. The FGAM synthase complex is composed of three subunits. PurQ produces an ammonia molecule by converting glutamine to glutamate. PurL transfers the ammonia molecule to FGAR to form FGAM in an ATP-dependent manner. PurS interacts with PurQ and PurL and is thought to assist in the transfer of the ammonia molecule from PurQ to PurL. This is Phosphoribosylformylglycinamidine synthase subunit PurL from Roseobacter denitrificans (strain ATCC 33942 / OCh 114) (Erythrobacter sp. (strain OCh 114)).